The primary structure comprises 186 residues: Large ribosomal subunit protein uL5 (186 aa).

Belongs to the universal ribosomal protein uL5 family. Part of the 50S ribosomal subunit; part of the 5S rRNA/L5/L18/L25 subcomplex. Contacts the 5S rRNA and the P site tRNA. Forms a bridge to the 30S subunit in the 70S ribosome.

In terms of biological role, this is one of the proteins that bind and probably mediate the attachment of the 5S RNA into the large ribosomal subunit, where it forms part of the central protuberance. In the 70S ribosome it contacts protein S13 of the 30S subunit (bridge B1b), connecting the 2 subunits; this bridge is implicated in subunit movement. Contacts the P site tRNA; the 5S rRNA and some of its associated proteins might help stabilize positioning of ribosome-bound tRNAs. In Cereibacter sphaeroides (strain ATCC 17029 / ATH 2.4.9) (Rhodobacter sphaeroides), this protein is Large ribosomal subunit protein uL5.